Reading from the N-terminus, the 150-residue chain is Large ribosomal subunit protein bL9 (150 aa).

The protein belongs to the bacterial ribosomal protein bL9 family.

Functionally, binds to the 23S rRNA. This Shewanella baltica (strain OS223) protein is Large ribosomal subunit protein bL9.